Consider the following 432-residue polypeptide: ATP-dependent RNA helicase RhlB (432 aa).

The short motif at 9–37 (QNFADLGLQPQVIDGLNAKGFIKCTPIQA) is the Q motif element. Positions 40–219 (LPVLLAGQDI…FEHMQEPEHV (180 aa)) constitute a Helicase ATP-binding domain. 53-60 (AQTGTGKT) contacts ATP. A DEAD box motif is present at residues 165-168 (DEAD). The region spanning 245–390 (ALLQTLIEEE…QSDYDASALL (146 aa)) is the Helicase C-terminal domain. Positions 397–432 (LRLQRRPQQNRRNNNGQRQGGNRKHSRPRQPRNTQS) are disordered. Positions 417 to 426 (GNRKHSRPRQ) are enriched in basic residues.

Belongs to the DEAD box helicase family. RhlB subfamily. Component of the RNA degradosome, which is a multiprotein complex involved in RNA processing and mRNA degradation.

The protein localises to the cytoplasm. The catalysed reaction is ATP + H2O = ADP + phosphate + H(+). In terms of biological role, DEAD-box RNA helicase involved in RNA degradation. Has RNA-dependent ATPase activity and unwinds double-stranded RNA. This chain is ATP-dependent RNA helicase RhlB, found in Aliivibrio fischeri (strain MJ11) (Vibrio fischeri).